We begin with the raw amino-acid sequence, 64 residues long: MFNFDPTDQPTDQHLLQLPTDPHPLQQPIDPHPPPQPNNNLPFLNNHTIIYIYPNNQLTHIHNQ.

Over residues 1 to 14 (MFNFDPTDQPTDQH) the composition is skewed to polar residues. Positions 1-42 (MFNFDPTDQPTDQHLLQLPTDPHPLQQPIDPHPPPQPNNNLP) are disordered.

This is an uncharacterized protein from Dictyostelium discoideum (Social amoeba).